The primary structure comprises 355 residues: Holliday junction branch migration complex subunit RuvB (355 aa).

Positions methionine 1–tyrosine 193 are large ATPase domain (RuvB-L). Residues leucine 32, arginine 33, glycine 74, lysine 77, threonine 78, serine 79, glutamate 140–phenylalanine 142, arginine 183, tyrosine 193, and arginine 230 each bind ATP. Threonine 78 lines the Mg(2+) pocket. Positions glutamate 194–aspartate 264 are small ATPAse domain (RuvB-S). The tract at residues glutamate 267–aspartate 355 is head domain (RuvB-H). Residues arginine 322 and arginine 327 each contribute to the DNA site.

This sequence belongs to the RuvB family. In terms of assembly, homohexamer. Forms an RuvA(8)-RuvB(12)-Holliday junction (HJ) complex. HJ DNA is sandwiched between 2 RuvA tetramers; dsDNA enters through RuvA and exits via RuvB. An RuvB hexamer assembles on each DNA strand where it exits the tetramer. Each RuvB hexamer is contacted by two RuvA subunits (via domain III) on 2 adjacent RuvB subunits; this complex drives branch migration. In the full resolvosome a probable DNA-RuvA(4)-RuvB(12)-RuvC(2) complex forms which resolves the HJ.

The protein localises to the cytoplasm. It carries out the reaction ATP + H2O = ADP + phosphate + H(+). In terms of biological role, the RuvA-RuvB-RuvC complex processes Holliday junction (HJ) DNA during genetic recombination and DNA repair, while the RuvA-RuvB complex plays an important role in the rescue of blocked DNA replication forks via replication fork reversal (RFR). RuvA specifically binds to HJ cruciform DNA, conferring on it an open structure. The RuvB hexamer acts as an ATP-dependent pump, pulling dsDNA into and through the RuvAB complex. RuvB forms 2 homohexamers on either side of HJ DNA bound by 1 or 2 RuvA tetramers; 4 subunits per hexamer contact DNA at a time. Coordinated motions by a converter formed by DNA-disengaged RuvB subunits stimulates ATP hydrolysis and nucleotide exchange. Immobilization of the converter enables RuvB to convert the ATP-contained energy into a lever motion, pulling 2 nucleotides of DNA out of the RuvA tetramer per ATP hydrolyzed, thus driving DNA branch migration. The RuvB motors rotate together with the DNA substrate, which together with the progressing nucleotide cycle form the mechanistic basis for DNA recombination by continuous HJ branch migration. Branch migration allows RuvC to scan DNA until it finds its consensus sequence, where it cleaves and resolves cruciform DNA. The sequence is that of Holliday junction branch migration complex subunit RuvB from Mycolicibacterium vanbaalenii (strain DSM 7251 / JCM 13017 / BCRC 16820 / KCTC 9966 / NRRL B-24157 / PYR-1) (Mycobacterium vanbaalenii).